An 867-amino-acid chain; its full sequence is Protein translocase subunit SecA 1 (867 aa).

Residues Gln86, 104–108, and Asp493 contribute to the ATP site; that span reads GEGKT.

The protein belongs to the SecA family. In terms of assembly, monomer and homodimer. Part of the essential Sec protein translocation apparatus which comprises SecA, SecYEG and auxiliary proteins SecDF. Other proteins may also be involved.

The protein resides in the cell membrane. The protein localises to the cytoplasm. The catalysed reaction is ATP + H2O + cellular proteinSide 1 = ADP + phosphate + cellular proteinSide 2.. In terms of biological role, part of the Sec protein translocase complex. Interacts with the SecYEG preprotein conducting channel. Has a central role in coupling the hydrolysis of ATP to the transfer of proteins into and across the cell membrane, serving as an ATP-driven molecular motor driving the stepwise translocation of polypeptide chains across the membrane. In Corynebacterium jeikeium (strain K411), this protein is Protein translocase subunit SecA 1.